The primary structure comprises 233 residues: 2-amino-5-formylamino-6-ribosylaminopyrimidin-4(3H)-one 5'-monophosphate deformylase (233 aa).

Positions 33, 35, 44, and 114 each coordinate Fe cation.

The protein belongs to the creatininase superfamily. FAPy deformylase family. As to quaternary structure, homodimer. Requires Fe(2+) as cofactor. Zn(2+) serves as cofactor.

It carries out the reaction 2-amino-5-formylamino-6-(5-phospho-D-ribosylamino)pyrimidin-4(3H)-one + H2O = 2,5-diamino-6-(1-D-ribosylamino)pyrimidin-4(3H)-one 5'-phosphate + formate + H(+). Its pathway is cofactor biosynthesis; coenzyme F420 biosynthesis. The protein operates within cofactor biosynthesis; riboflavin biosynthesis. In terms of biological role, catalyzes the hydrolysis of the formamide of 2-amino-5-formylamino-6-ribosylamino-4(3H)-pyrimidinone 5'-monophosphate (FAPy) to form 2,5-diamino-6-ribosylamino-4(3H)-pyrimidinone 5'-phosphate (APy). The sequence is that of 2-amino-5-formylamino-6-ribosylaminopyrimidin-4(3H)-one 5'-monophosphate deformylase from Methanosphaera stadtmanae (strain ATCC 43021 / DSM 3091 / JCM 11832 / MCB-3).